Reading from the N-terminus, the 279-residue chain is Protein gustavus (279 aa).

The 198-residue stretch at 36–233 (PARIDILLDM…ITMRYIGGLD (198 aa)) folds into the B30.2/SPRY domain. Residues 234-279 (PEPLPLMDLCRRTIRQKIGRTNLEEHIQQLQLPLSMKTYLLYKNRR) form the SOCS box domain. An involved in binding to the Elongin BC complex region spans residues 236–279 (PLPLMDLCRRTIRQKIGRTNLEEHIQQLQLPLSMKTYLLYKNRR).

This sequence belongs to the SPSB family. As to quaternary structure, interacts (via B30.2/SPRY domain) with vas; this interaction may be necessary for the transport of vas to the posterior pole of the oocyte. Interacts with Cul-5. May associate with the Elongin BC complex composed of Elongin-B and Elongin-C. As to expression, expressed in ovaries, primarily in nurse cells and oocytes (at protein level).

The protein localises to the cytoplasm. It is found in the nucleus. Functionally, involved in the localization of vas to the posterior pole of the oocyte. Required maternally in the germ line for efficient primordial germ cell formation. In Drosophila melanogaster (Fruit fly), this protein is Protein gustavus (gus).